The primary structure comprises 122 residues: Aspartate 1-decarboxylase (122 aa).

Serine 25 acts as the Schiff-base intermediate with substrate; via pyruvic acid in catalysis. Pyruvic acid (Ser) is present on serine 25. Residue threonine 57 coordinates substrate. Tyrosine 58 acts as the Proton donor in catalysis. Position 73–75 (73–75 (GAA)) interacts with substrate.

It belongs to the PanD family. As to quaternary structure, heterooctamer of four alpha and four beta subunits. Pyruvate serves as cofactor. Is synthesized initially as an inactive proenzyme, which is activated by self-cleavage at a specific serine bond to produce a beta-subunit with a hydroxyl group at its C-terminus and an alpha-subunit with a pyruvoyl group at its N-terminus.

It localises to the cytoplasm. It carries out the reaction L-aspartate + H(+) = beta-alanine + CO2. The protein operates within cofactor biosynthesis; (R)-pantothenate biosynthesis; beta-alanine from L-aspartate: step 1/1. In terms of biological role, catalyzes the pyruvoyl-dependent decarboxylation of aspartate to produce beta-alanine. The protein is Aspartate 1-decarboxylase of Bordetella parapertussis (strain 12822 / ATCC BAA-587 / NCTC 13253).